The following is a 409-amino-acid chain: D-galactonate dehydratase family member Achl_0790 (409 aa).

Mg(2+) is bound at residue aspartate 217. Residue histidine 219 coordinates D-arabinonate. Mg(2+)-binding residues include glutamate 243 and glutamate 269. Glutamate 269, arginine 290, histidine 319, and glutamate 346 together coordinate D-arabinonate.

This sequence belongs to the mandelate racemase/muconate lactonizing enzyme family. GalD subfamily.

Functionally, has no detectable activity with D-mannonate and with a panel of 70 other acid sugars (in vitro), in spite of the conservation of the residues that are expected to be important for catalytic activity and cofactor binding. May have evolved a divergent function. The polypeptide is D-galactonate dehydratase family member Achl_0790 (Pseudarthrobacter chlorophenolicus (strain ATCC 700700 / DSM 12829 / CIP 107037 / JCM 12360 / KCTC 9906 / NCIMB 13794 / A6) (Arthrobacter chlorophenolicus)).